A 633-amino-acid polypeptide reads, in one-letter code: Probably inactive receptor-like protein kinase At2g46850 (633 aa).

Positions M1–S28 are cleaved as a signal peptide. Residues I29–T285 lie on the Extracellular side of the membrane. N-linked (GlcNAc...) asparagine glycans are attached at residues N45, N69, and N231. The chain crosses the membrane as a helical span at residues V286 to L306. At L307–T633 the chain is on the cytoplasmic side. The region spanning F355–T633 is the Protein kinase domain. ATP-binding positions include L361–I369 and K384.

The protein belongs to the protein kinase superfamily. Ser/Thr protein kinase family.

The protein resides in the membrane. This Arabidopsis thaliana (Mouse-ear cress) protein is Probably inactive receptor-like protein kinase At2g46850.